A 148-amino-acid chain; its full sequence is Large ribosomal subunit protein uL15B (148 aa).

2 stretches are compositionally biased toward basic residues: residues 1 to 13 (MPTHTSKTRKLRG) and 21 to 31 (RIGKHRKHPGG). A disordered region spans residues 1–38 (MPTHTSKTRKLRGHVSAGHGRIGKHRKHPGGRGKAGGL). A Phosphotyrosine modification is found at Tyr-108.

Belongs to the universal ribosomal protein uL15 family. As to quaternary structure, component of the large ribosomal subunit (LSU). Mature yeast ribosomes consist of a small (40S) and a large (60S) subunit. The 40S small subunit contains 1 molecule of ribosomal RNA (18S rRNA) and at least 33 different proteins. The large 60S subunit contains 3 rRNA molecules (25S, 5.8S and 5S rRNA) and at least 46 different proteins.

Its subcellular location is the cytoplasm. The protein resides in the nucleus. It is found in the nucleolus. In terms of biological role, component of the ribosome, a large ribonucleoprotein complex responsible for the synthesis of proteins in the cell. The small ribosomal subunit (SSU) binds messenger RNAs (mRNAs) and translates the encoded message by selecting cognate aminoacyl-transfer RNA (tRNA) molecules. The large subunit (LSU) contains the ribosomal catalytic site termed the peptidyl transferase center (PTC), which catalyzes the formation of peptide bonds, thereby polymerizing the amino acids delivered by tRNAs into a polypeptide chain. The nascent polypeptides leave the ribosome through a tunnel in the LSU and interact with protein factors that function in enzymatic processing, targeting, and the membrane insertion of nascent chains at the exit of the ribosomal tunnel. The polypeptide is Large ribosomal subunit protein uL15B (rpl2801) (Schizosaccharomyces pombe (strain 972 / ATCC 24843) (Fission yeast)).